Consider the following 308-residue polypeptide: Ribosomal RNA small subunit methyltransferase H (308 aa).

S-adenosyl-L-methionine-binding positions include 36-38 (GGH), Asp55, Phe86, Asp103, and Gln110.

It belongs to the methyltransferase superfamily. RsmH family.

It localises to the cytoplasm. The enzyme catalyses cytidine(1402) in 16S rRNA + S-adenosyl-L-methionine = N(4)-methylcytidine(1402) in 16S rRNA + S-adenosyl-L-homocysteine + H(+). Functionally, specifically methylates the N4 position of cytidine in position 1402 (C1402) of 16S rRNA. This is Ribosomal RNA small subunit methyltransferase H from Helicobacter pylori (strain P12).